The sequence spans 186 residues: ATP-dependent protease subunit HslV (186 aa).

Residue T13 is part of the active site. Residues A167, C170, and T173 each contribute to the Na(+) site.

The protein belongs to the peptidase T1B family. HslV subfamily. A double ring-shaped homohexamer of HslV is capped on each side by a ring-shaped HslU homohexamer. The assembly of the HslU/HslV complex is dependent on binding of ATP.

It localises to the cytoplasm. It catalyses the reaction ATP-dependent cleavage of peptide bonds with broad specificity.. Its activity is regulated as follows. Allosterically activated by HslU binding. In terms of biological role, protease subunit of a proteasome-like degradation complex believed to be a general protein degrading machinery. This is ATP-dependent protease subunit HslV from Allorhizobium ampelinum (strain ATCC BAA-846 / DSM 112012 / S4) (Agrobacterium vitis (strain S4)).